Reading from the N-terminus, the 182-residue chain is Large ribosomal subunit protein bL19m (182 aa).

The transit peptide at 1-21 (MFNAKHFFNLGLGFQWLQKRG) directs the protein to the mitochondrion.

It belongs to the bacterial ribosomal protein bL19 family. In terms of assembly, component of the mitochondrial large ribosomal subunit (mt-LSU). Mature yeast 74S mitochondrial ribosomes consist of a small (37S) and a large (54S) subunit. The 37S small subunit contains a 15S ribosomal RNA (15S mt-rRNA) and at least 32 different proteins. The 54S large subunit contains a 21S rRNA (21S mt-rRNA) and at least 45 different proteins.

It is found in the mitochondrion. Functionally, component of the mitochondrial ribosome (mitoribosome), a dedicated translation machinery responsible for the synthesis of mitochondrial genome-encoded proteins, including at least some of the essential transmembrane subunits of the mitochondrial respiratory chain. The mitoribosomes are attached to the mitochondrial inner membrane and translation products are cotranslationally integrated into the membrane. bL19m is essential for respiration. The chain is Large ribosomal subunit protein bL19m (img1) from Schizosaccharomyces pombe (strain 972 / ATCC 24843) (Fission yeast).